Here is a 1223-residue protein sequence, read N- to C-terminus: Rho family-interacting cell polarization regulator 1 (1223 aa).

S22 is subject to Phosphoserine. The stretch at 83–112 forms a coiled coil; that stretch reads RGLTAYLEVHQQEQEKLQRQIKESKRNSRL. Phosphoserine occurs at positions 345 and 347. Residue T351 is modified to Phosphothreonine. The tract at residues 371–411 is disordered; the sequence is NGTAWSLSSESSDDSSSPQLSGTARHSTPKPLVQQPEPLPV. Composition is skewed to low complexity over residues 376 to 391 and 399 to 411; these read SLSS…PQLS and PKPL…PLPV. Residues S451, S454, and S468 each carry the phosphoserine modification. 2 stretches are compositionally biased toward low complexity: residues 566–586 and 595–655; these read TTIG…GSVP and TPSP…TSPT. Disordered regions lie at residues 566-771 and 856-887; these read TTIG…QHSE and FLND…LDSS. Residues 656–665 are compositionally biased toward polar residues; it reads QEAKMSTHTT. A compositionally biased stretch (low complexity) spans 673–688; it reads TTTSPISTTESPSPST. Composition is skewed to polar residues over residues 693 to 703 and 725 to 741; these read ISSSSAESTGP and ASCT…SKPL. S748 carries the phosphoserine modification. Residues 748–767 show a composition bias toward low complexity; it reads SPEQIPKSPSSSPSSSAPEP. Over residues 858 to 867 the composition is skewed to acidic residues; the sequence is NDDEDEDNDG. A compositionally biased stretch (basic and acidic residues) spans 868–885; sequence PGDRHTSSPEVVAEDRLD. A phosphoserine mark is found at S874 and S875.

It belongs to the RIPOR family. In terms of assembly, interacts (via N-terminus) with RHOA (GTP-bound form); this interaction links active RHOA to STK24 and STK26 kinases. Interacts with RHOB. Interacts with RHOC. Interacts (via C-terminus) with PDCD10; this interaction occurs in a Rho-independent manner. Interacts (via C-terminus) with STK24; this interaction occurs in a PDCD10-dependent and Rho-independent manner. Interacts (via C-terminus) with STK26; this interaction occurs in a PDCD10-dependent and Rho-independent manner. Interacts (via N-terminus) with 14-3-3 proteins; these interactions occur in a Rho-dependent manner. Expressed in the kidney exclusively by glomerular podocytes.

Its subcellular location is the cytoplasm. The protein resides in the golgi apparatus. Functionally, downstream effector protein for Rho-type small GTPases that plays a role in cell polarity and directional migration. Acts as an adapter protein, linking active Rho proteins to STK24 and STK26 kinases, and hence positively regulates Golgi reorientation in polarized cell migration upon Rho activation. Involved in the subcellular relocation of STK26 from the Golgi to cytoplasm punctae in a Rho- and PDCD10-dependent manner upon serum stimulation. This chain is Rho family-interacting cell polarization regulator 1, found in Mus musculus (Mouse).